Consider the following 140-residue polypeptide: Nucleoside diphosphate kinase (140 aa).

The ATP site is built by Lys-11, Phe-59, Arg-87, Thr-93, Arg-104, and Asn-114. Catalysis depends on His-117, which acts as the Pros-phosphohistidine intermediate.

It belongs to the NDK family. As to quaternary structure, homotetramer. Requires Mg(2+) as cofactor.

The protein resides in the cytoplasm. The catalysed reaction is a 2'-deoxyribonucleoside 5'-diphosphate + ATP = a 2'-deoxyribonucleoside 5'-triphosphate + ADP. It catalyses the reaction a ribonucleoside 5'-diphosphate + ATP = a ribonucleoside 5'-triphosphate + ADP. Its function is as follows. Major role in the synthesis of nucleoside triphosphates other than ATP. The ATP gamma phosphate is transferred to the NDP beta phosphate via a ping-pong mechanism, using a phosphorylated active-site intermediate. The protein is Nucleoside diphosphate kinase of Rickettsia bellii (strain OSU 85-389).